The chain runs to 588 residues: Adenine deaminase (588 aa).

It belongs to the metallo-dependent hydrolases superfamily. Adenine deaminase family. Homodimer. It depends on Mn(2+) as a cofactor.

It carries out the reaction adenine + H2O + H(+) = hypoxanthine + NH4(+). This Escherichia coli O9:H4 (strain HS) protein is Adenine deaminase.